A 256-amino-acid polypeptide reads, in one-letter code: GCN5-related N-acetyltransferase 10, chloroplastic (256 aa).

A chloroplast-targeting transit peptide spans 1-41 (MGHLPQSLYSAAGPKFPYPGSSGLGVDQRKLTWSRFPVFLR). Positions 106-256 (FMFFQAEVLS…RRVLMSKRFS (151 aa)) constitute an N-acetyltransferase domain. Acetyl-CoA contacts are provided by residues 178–180 (LAV), 186–191 (RKKMAS), 217–219 (DAA), and Tyr224. The active-site Proton donor is the Tyr224.

It belongs to the acetyltransferase family. GNAT subfamily. As to quaternary structure, oligomer. Autoacetylated. As to expression, expressed in green tissues.

It localises to the plastid. The protein localises to the chloroplast. The catalysed reaction is an N-terminal L-alpha-aminoacyl-[protein] + acetyl-CoA = N-terminal N(alpha)-acetyl-L-alpha-aminoacyl-[protein] + CoA + H(+). The enzyme catalyses L-lysyl-[protein] + acetyl-CoA = N(6)-acetyl-L-lysyl-[protein] + CoA + H(+). It catalyses the reaction N-terminal L-methionyl-[protein] + acetyl-CoA = N-terminal N(alpha)-acetyl-L-methionyl-[protein] + CoA + H(+). It carries out the reaction N-terminal L-seryl-[protein] + acetyl-CoA = N-terminal N(alpha)-acetyl-L-seryl-[protein] + CoA + H(+). The catalysed reaction is N-terminal L-valyl-[protein] + acetyl-CoA = N-terminal N(alpha)-acetyl-L-valyl-[protein] + CoA + H(+). The enzyme catalyses N-terminal L-threonyl-[protein] + acetyl-CoA = N-terminal N(alpha)-acetyl-L-threonyl-[protein] + CoA + H(+). It catalyses the reaction N-terminal L-alanyl-[protein] + acetyl-CoA = N-terminal N(alpha)-acetyl-L-alanyl-[protein] + CoA + H(+). It carries out the reaction N-terminal glycyl-[protein] + acetyl-CoA = N-terminal N(alpha)-acetylglycyl-[protein] + CoA + H(+). Its function is as follows. Protein acetyltransferase with dual specificity triggering both N-alpha-acetylation (NTA), with a preference for leucine, methionine, serine, valine and to a lower extent threonine and alanine as substrates (can also use glycine), and epsilon-lysine acetylation (KA) of several plastid proteins. The protein is GCN5-related N-acetyltransferase 10, chloroplastic of Arabidopsis thaliana (Mouse-ear cress).